A 340-amino-acid polypeptide reads, in one-letter code: tRNA N6-adenosine threonylcarbamoyltransferase (340 aa).

Fe cation contacts are provided by His111 and His115. Residues Leu134–Gly138, Asp167, Gly180, and Asn276 contribute to the substrate site. A Fe cation-binding site is contributed by Asp304.

This sequence belongs to the KAE1 / TsaD family. It depends on Fe(2+) as a cofactor.

Its subcellular location is the cytoplasm. It catalyses the reaction L-threonylcarbamoyladenylate + adenosine(37) in tRNA = N(6)-L-threonylcarbamoyladenosine(37) in tRNA + AMP + H(+). Functionally, required for the formation of a threonylcarbamoyl group on adenosine at position 37 (t(6)A37) in tRNAs that read codons beginning with adenine. Is involved in the transfer of the threonylcarbamoyl moiety of threonylcarbamoyl-AMP (TC-AMP) to the N6 group of A37, together with TsaE and TsaB. TsaD likely plays a direct catalytic role in this reaction. The polypeptide is tRNA N6-adenosine threonylcarbamoyltransferase (Helicobacter pylori (strain J99 / ATCC 700824) (Campylobacter pylori J99)).